A 1128-amino-acid chain; its full sequence is DNA-directed RNA polymerase subunit Rpo2 (1128 aa).

DsDNA-binding positions include Lys178, 181 to 182 (SN), Lys206, 435 to 439 (RGQPN), and 1027 to 1032 (RFGEME). 4 residues coordinate Zn(2+): Cys1061, Cys1064, Cys1079, and His1082.

The protein belongs to the RNA polymerase beta chain family. Part of the 13-subunit RNA polymerase complex. The cofactor is Zn(2+).

It localises to the cytoplasm. The enzyme catalyses RNA(n) + a ribonucleoside 5'-triphosphate = RNA(n+1) + diphosphate. DNA-dependent RNA polymerase (RNAP) catalyzes the transcription of DNA into RNA using the four ribonucleoside triphosphates as substrates. This subunit is involved in DNA promoter recognition. This Saccharolobus shibatae (strain ATCC 51178 / DSM 5389 / JCM 8931 / NBRC 15437 / B12) (Sulfolobus shibatae) protein is DNA-directed RNA polymerase subunit Rpo2.